A 115-amino-acid chain; its full sequence is LSM complex subunit LSM7 (115 aa).

Residues 1 to 10 (MHQQHSKSEN) are compositionally biased toward basic and acidic residues. The interval 1 to 23 (MHQQHSKSENKPQQQRKKFEGPK) is disordered. The region spanning 25-108 (EAILDLAKYK…LVSLSSAEGS (84 aa)) is the Sm domain.

Belongs to the snRNP Sm proteins family. Component of the heptameric LSM1-LSM7 complex that forms a seven-membered ring structure with a donut shape. The LSm subunits are arranged in the order LSM1, LSM2, LSM3, LSM6, LSM5, LSM7 and LSM4. Except for LSM1, where a C-terminal helix crosses the ring structure to form additional interactions with LSM3 and LSM6, each subunit interacts only with its two neighboring subunits. The LSM1-LSM7 complex interacts with PAT1; within the complex PAT1 has direct interactions with LSM2 and LSM3. The LSM1-LSM7 complex interacts with XRN1. Component of the heptameric LSM2-LSM8 complex that forms a seven-membered ring structure with a donut shape; an RNA strand can pass through the hole in the center of the ring structure. The LSm subunits are arranged in the order LSM8, LSM2, LSM3, LSM6, LSM5, LSM7 and LSM4. Component of the spliceosome U4/U6-U5 tri-snRNP complex composed of the U4, U6 and U5 snRNAs and at least PRP3, PRP4, PRP6, PRP8, PRP18, PRP31, PRP38, SNU13, SNU23, SNU66, SNU114, SPP381, SMB1, SMD1, SMD2, SMD3, SMX2, SMX3, LSM2, LSM3, LSM4, LSM5, LSM6, LSM7, LSM8, BRR2 and DIB1. May be found in a complex comprising LSM2-LSM7 without LSM1 or LSM8; the complex associates with pre-P RNA and snoRNA SNR5.

The protein resides in the nucleus. Its subcellular location is the nucleolus. The protein localises to the cytoplasm. Component of LSm protein complexes, which are involved in RNA processing and may function in a chaperone-like manner. Component of the cytoplasmic LSM1-LSM7 complex which is involved in mRNA degradation by activating the decapping step. Together with PAT1, the LSM1-LSM7 complex binds to osmotic stress-activated mRNAs to attenuate the osmotic stress response, probably by limiting ribosome access to the mRNA and consequently translation. Component of the nuclear LSM2-LSM8 complex, which is involved in spliceosome assembly. The LSM2-LSM8 complex plays a role in the biogenesis of the spliceosomal U4/U6-U5 tri-snRNP complex by accelerating PRP24-mediated annealing of U4/U6 di-snRNA. The LSM2-LSM8 complex binds U6 snRNA terminating with a non-cyclic 3' phosphate group. LSM2-LSM8 is probably also involved in degradation of nuclear pre-mRNA by targeting them for decapping. LSM2-LSM8 could be involved in processing of pre-tRNAs, pre-rRNAs and U3 snoRNA, although involvement may be indirect. In a complex that probably contains LSM2-LSM7, but not LSM1 or LSM8, associates with the precursor of the RNA component of RNase P (pre-P RNA) and may be involved in maturing pre-P RNA; the complex also associates with snoRNA SNR5. This chain is LSM complex subunit LSM7 (LSM7), found in Saccharomyces cerevisiae (strain ATCC 204508 / S288c) (Baker's yeast).